The sequence spans 61 residues: Small ribosomal subunit protein uS14B (61 aa).

Residues cysteine 24, cysteine 27, cysteine 40, and cysteine 43 each contribute to the Zn(2+) site.

Belongs to the universal ribosomal protein uS14 family. Zinc-binding uS14 subfamily. As to quaternary structure, part of the 30S ribosomal subunit. Contacts proteins S3 and S10. It depends on Zn(2+) as a cofactor.

In terms of biological role, binds 16S rRNA, required for the assembly of 30S particles and may also be responsible for determining the conformation of the 16S rRNA at the A site. The polypeptide is Small ribosomal subunit protein uS14B (Staphylococcus saprophyticus subsp. saprophyticus (strain ATCC 15305 / DSM 20229 / NCIMB 8711 / NCTC 7292 / S-41)).